A 636-amino-acid chain; its full sequence is ATP-dependent DNA helicase YoaA (636 aa).

Residues glutamine 10–alanine 272 enclose the Helicase ATP-binding domain. Residue alanine 45 to threonine 52 coordinates ATP. 4 residues coordinate [4Fe-4S] cluster: cysteine 108, cysteine 168, cysteine 173, and cysteine 179. Residues aspartate 225–histidine 228 carry the DEAH box motif.

This sequence belongs to the helicase family. DinG subfamily. In terms of assembly, interacts with the DNA polymerase III subunit Chi (holC), probably as a 1:1 complex. The cofactor is [4Fe-4S] cluster. It depends on Mg(2+) as a cofactor.

The catalysed reaction is Couples ATP hydrolysis with the unwinding of duplex DNA at the replication fork by translocating in the 5'-3' direction. This creates two antiparallel DNA single strands (ssDNA). The leading ssDNA polymer is the template for DNA polymerase III holoenzyme which synthesizes a continuous strand.. The enzyme catalyses ATP + H2O = ADP + phosphate + H(+). With respect to regulation, non-hydrolyzable ATP analogs ATP-gamma-S and adenylyl-imidodiphosphate (AMP-PNP) inhibit helicase activity. DNA-dependent ATPase and 5'-3' DNA helicase. Has single-stranded (ss)DNA-dependent ATPase activity and 5'-3' helicase activity on forked DNA; both activities were measure in a YoaA:HolC (chi) complex. Requires a 20-35 nucleotide (nt) 5'-ssDNA tail; dsDNA with a 20 nt gap is also unwound. Unwinds damaged 3' nascent ends (such as those terminated by 3' azidothymidine (AZT), 3' dideoxy-C or an abasic site on the translocating strand), to promote repair and AZT excision. Without HolC the protein has much lower activity which could be due to YoaA instability or helicase stimulation by HolC. Genetically identified as involved in the repair of replication forks and tolerance of the chain-terminating nucleoside analog AZT. May act in proofreading during nucleotide misincorporation, it appears to aid in the removal of potential A-to-T transversion mutations in ndk mutants. The polypeptide is ATP-dependent DNA helicase YoaA (yoaA) (Escherichia coli (strain K12)).